Reading from the N-terminus, the 335-residue chain is MAAAPPIEPAVTTTFPGFKFSPTDIELISYYLKRKMDGLERSVEIIPEVEIYNFEPWDLPDKSIVKSDSEWFFFCARGKKYPHGSQNRRATKIGYWKATGKERNVKSGSEVIGTKRTLVFHIGRAPKGGRTEWLMHEYCMIGVSLDALVICRLRRNTEFQGSTIQKPPQPSLPLDKHVNLRNEAISESIYGWETMVDFYLSSESGQELLSEIAESSQSSQNPQVPSEEDFYADILRDEIVKLDDPAVSGNTLINVPRLQTESNTTRVLPLPDMVDKQMQSLLQKLPLQNDTGEENNISMSNCFIGIYSIKSINRARWDVVVWLLVMIAVLVFYLV.

One can recognise an NAC domain in the interval 14 to 156 (TFPGFKFSPT…ALVICRLRRN (143 aa)). The DNA-binding element occupies 112–162 (IGTKRTLVFHIGRAPKGGRTEWLMHEYCMIGVSLDALVICRLRRNTEFQGS). A helical transmembrane segment spans residues 315 to 335 (ARWDVVVWLLVMIAVLVFYLV).

As to expression, expressed in roots, rosette leaves, cauline leaves, shoot apex, stems and flowers.

The protein resides in the membrane. The protein localises to the nucleus. In terms of biological role, transcriptional activator activated by proteolytic cleavage through regulated intramembrane proteolysis (RIP). Transcription factor involved in modulation of abscisic acid (ABA) signaling. Attenuates ABA sensitivity and glucose-induced ABA accumulation. Reduces the expression of ABI4 gene. The sequence is that of NAC domain-containing protein 60 from Arabidopsis thaliana (Mouse-ear cress).